Here is a 249-residue protein sequence, read N- to C-terminus: MNEAAKTLDGWYCLHDFRTINWAELKTLSTEERQQIINEFLDLMEKWNDTEAQGEGSHAVYTIVGQKADVMLMILRPSMEELNEIETAFNKSRFAEFTVPAYSYVSVVELSNYMAGDSDDDPYQNPHVRARLYPQLPKAKHVCFYPMDKRRQGDDNWYMLPMDQRRELMKSHGMIGRSYAGKVKQIITGSVGFDDWEWGVTLFADDVLQFKKLVYEMRFDEVSARYGEFGSFFVGNLLTAEGIPSYFYV.

Fe-coproporphyrin III-binding positions include arginine 131, tyrosine 145–lysine 149, histidine 172, glutamine 185, and serine 223. Tyrosine 145 is an active-site residue.

This sequence belongs to the ChdC family. Type 1 subfamily. It depends on Fe-coproporphyrin III as a cofactor.

The catalysed reaction is Fe-coproporphyrin III + 2 H2O2 + 2 H(+) = heme b + 2 CO2 + 4 H2O. The enzyme catalyses Fe-coproporphyrin III + H2O2 + H(+) = harderoheme III + CO2 + 2 H2O. It carries out the reaction harderoheme III + H2O2 + H(+) = heme b + CO2 + 2 H2O. It functions in the pathway porphyrin-containing compound metabolism; protoheme biosynthesis. Its function is as follows. Involved in coproporphyrin-dependent heme b biosynthesis. Catalyzes the decarboxylation of Fe-coproporphyrin III (coproheme) to heme b (protoheme IX), the last step of the pathway. The reaction occurs in a stepwise manner with a three-propionate intermediate. The sequence is that of Coproheme decarboxylase from Halalkalibacterium halodurans (strain ATCC BAA-125 / DSM 18197 / FERM 7344 / JCM 9153 / C-125) (Bacillus halodurans).